The primary structure comprises 298 residues: Cyanophycinase (298 aa).

Active-site charge relay system residues include serine 155, glutamate 173, and histidine 197.

This sequence belongs to the peptidase S51 family.

The catalysed reaction is [L-4-(L-arginin-2-N-yl)aspartate](n) + H2O = [L-4-(L-arginin-2-N-yl)aspartate](n-1) + L-4-(L-arginin-2-N-yl)aspartate. Functionally, exopeptidase that catalyzes the hydrolytic cleavage of multi-L-arginyl-poly-L-aspartic acid (cyanophycin; a water-insoluble reserve polymer) into aspartate-arginine dipeptides. The chain is Cyanophycinase (cphB) from Nostoc sp. (strain PCC 7120 / SAG 25.82 / UTEX 2576).